Here is a 620-residue protein sequence, read N- to C-terminus: Cell fusion protein cfr1 (620 aa).

In terms of domain architecture, Fibronectin type-III spans 79-169; sequence LPSPPVLKLK…KHITIKTLRM (91 aa). One can recognise a BRCT domain in the interval 167 to 256; that stretch reads LRMIDLTGIQ…RLVNVSGFYI (90 aa). Disordered regions lie at residues 287–566 and 588–620; these read QPKN…PEKA and KQSS…VNID. The segment covering 303–314 has biased composition (polar residues); it reads APQQTTQQGTQN. Residues 315–330 are compositionally biased toward low complexity; sequence SANAEPSSSASVPAEA. A compositionally biased stretch (polar residues) spans 352-375; it reads SKPNEAPTSSENIKADQPENSTKQ. Basic and acidic residues predominate over residues 382 to 392; that stretch reads MQIKDAEEHSN. The segment covering 393–406 has biased composition (polar residues); sequence LESTPAAQQTSEVE. Over residues 424-434 the composition is skewed to low complexity; sequence NVNEENNTPET. Positions 445 to 468 are enriched in polar residues; that stretch reads NTAAESLINQEETTSGEAVTKSTV. Residues 472-484 are compositionally biased toward acidic residues; it reads ANEEEAEPNEIIE. Over residues 506–515 the composition is skewed to polar residues; it reads NNANSENANG. A compositionally biased stretch (basic and acidic residues) spans 517-537; that stretch reads TDEKIIEAPLDTKENSDDDKP.

It belongs to the CHS5 family.

The protein localises to the golgi apparatus. Its function is as follows. Required for cell fusion, independently of fus1. Appears to have a role in transporting proteins that are involved in mating. May act as a scaffold to retain cell fusion proteins in the cisternae of the Golgi. Degraded at the onset of mating and this leads to release of cell fusion proteins. This is Cell fusion protein cfr1 (cfr1) from Schizosaccharomyces pombe (strain 972 / ATCC 24843) (Fission yeast).